Here is an 85-residue protein sequence, read N- to C-terminus: Probable small nuclear ribonucleoprotein G (85 aa).

Residues Q6–M78 form the Sm domain.

This sequence belongs to the snRNP Sm proteins family. Core component of the spliceosomal U1, U2, U4 and U5 small nuclear ribonucleoproteins (snRNPs), the building blocks of the spliceosome. Most spliceosomal snRNPs contain a common set of Sm proteins, SNRPB, SNRPD1, SNRPD2, SNRPD3, SNRPE, SNRPF and SNRPG that assemble in a heptameric protein ring on the Sm site of the small nuclear RNA to form the core snRNP. Component of the U1 snRNP. Component of the U4/U6-U5 tri-snRNP complex. Component of the U7 snRNP complex. Component of the U11/U12 snRNPs that are part of the U12-type spliceosome.

The protein resides in the cytoplasm. Its subcellular location is the cytosol. It localises to the nucleus. Plays a role in pre-mRNA splicing as a core component of the spliceosomal U1, U2, U4 and U5 small nuclear ribonucleoproteins (snRNPs), the building blocks of the spliceosome. Component of both the pre-catalytic spliceosome B complex and activated spliceosome C complexes. Is also a component of the minor U12 spliceosome. This Dictyostelium discoideum (Social amoeba) protein is Probable small nuclear ribonucleoprotein G (snrpG).